The chain runs to 442 residues: tRNA modification GTPase MnmE (442 aa).

(6S)-5-formyl-5,6,7,8-tetrahydrofolate-binding residues include Arg24, Glu84, and Arg124. The region spanning 218 to 366 (GARVALFGPV…LRDDMLGRLW (149 aa)) is the TrmE-type G domain. Residues 228 to 233 (NAGKST), 247 to 253 (DDEPGTT), and 272 to 275 (DTAG) contribute to the GTP site. The Mg(2+) site is built by Ser232 and Thr253. Lys442 lines the (6S)-5-formyl-5,6,7,8-tetrahydrofolate pocket.

This sequence belongs to the TRAFAC class TrmE-Era-EngA-EngB-Septin-like GTPase superfamily. TrmE GTPase family. As to quaternary structure, homodimer. Heterotetramer of two MnmE and two MnmG subunits. K(+) serves as cofactor.

It is found in the cytoplasm. Its function is as follows. Exhibits a very high intrinsic GTPase hydrolysis rate. Involved in the addition of a carboxymethylaminomethyl (cmnm) group at the wobble position (U34) of certain tRNAs, forming tRNA-cmnm(5)s(2)U34. This is tRNA modification GTPase MnmE from Myxococcus xanthus (strain DK1622).